Reading from the N-terminus, the 295-residue chain is Inositol monophosphatase 1 (295 aa).

Positions 73, 92, 94, 95, and 231 each coordinate Mg(2+). E73 is a binding site for substrate. Substrate is bound by residues 94-97 (IDGT) and D231.

This sequence belongs to the inositol monophosphatase superfamily. It depends on Mg(2+) as a cofactor.

The protein resides in the cytoplasm. It is found in the nucleus. The enzyme catalyses a myo-inositol phosphate + H2O = myo-inositol + phosphate. The protein operates within polyol metabolism; myo-inositol biosynthesis; myo-inositol from D-glucose 6-phosphate: step 2/2. Inhibited by Li(+) and Na(+). Its function is as follows. Responsible for the provision of inositol required for synthesis of phosphatidylinositol and polyphosphoinositides. This Saccharomyces cerevisiae (strain ATCC 204508 / S288c) (Baker's yeast) protein is Inositol monophosphatase 1 (INM1).